The primary structure comprises 295 residues: UDP-N-acetylenolpyruvoylglucosamine reductase (295 aa).

Positions Lys-24–Gly-188 constitute an FAD-binding PCMH-type domain. Arg-168 is an active-site residue. Ser-217 acts as the Proton donor in catalysis. Residue Glu-287 is part of the active site.

The protein belongs to the MurB family. It depends on FAD as a cofactor.

The protein resides in the cytoplasm. It carries out the reaction UDP-N-acetyl-alpha-D-muramate + NADP(+) = UDP-N-acetyl-3-O-(1-carboxyvinyl)-alpha-D-glucosamine + NADPH + H(+). It functions in the pathway cell wall biogenesis; peptidoglycan biosynthesis. Cell wall formation. This Rickettsia rickettsii (strain Iowa) protein is UDP-N-acetylenolpyruvoylglucosamine reductase.